The sequence spans 261 residues: X-box-binding protein 1 (261 aa).

Residues 1–185 (MVVVAAAPNP…VQAQLSPLQN (185 aa)) lie on the Cytoplasmic side of the membrane. Residues 44 to 93 (RGASPEAASGGLPQARKRQRLTHLSPEEKALRRKLKNRVAAQTARDRKKA) are disordered. A phosphoserine mark is found at S47 and S68. Residues 70–133 (EEKALRRKLK…HGLVVENQEL (64 aa)) form the bZIP domain. The segment at 72–94 (KALRRKLKNRVAAQTARDRKKAR) is basic motif. The interval 75-92 (RRKLKNRVAAQTARDRKK) is nuclear localization signal (NLS); in isoforms 1 and isoform 2. The segment at 98-133 (LEQQVVDLEEENQKLLLENQLLREKTHGLVVENQEL) is leucine-zipper. Residues 186–203 (ISPWILAVLTLQIQSLIS) traverse the membrane as a helical; Signal-anchor for type II membrane protein segment. Residues 204–261 (CWAFWTTWTQSCSSNALPQSLPAWRSSQRSTQKDPVPYQPPFLCQWGRHQPSWKPLMN) are Lumenal-facing. The segment at 235–261 (QKDPVPYQPPFLCQWGRHQPSWKPLMN) is necessary for the translational pausing of its own mRNA.

It belongs to the bZIP family. As to quaternary structure, isoform 2 interacts with SIRT1. Isoform 2 interacts with PIK3R1 and PIK3R2; the interactions are direct and induce translocation of XBP1 isoform 2 into the nucleus and the unfolded protein response (UPR) XBP1-dependent target genes activation in a ER stress- and/or insulin-dependent but PI3K-independent manner. Isoform 2 interacts with FOXO1; the interaction is direct and leads to FOXO1 ubiquitination and degradation via the proteasome pathway in hepatocytes. Isoform 1 interacts with HM13. Isoform 1 interacts with RNF139; the interaction induces ubiquitination and degradation of isoform 1. Isoform 1 interacts (via luminal domain) with DERL1; the interaction obviates the need for ectodomain shedding prior HM13/SPP-mediated XBP1 isoform 1 cleavage. Isoform 1 interacts with isoform 2; the interaction sequesters isoform 2 from the nucleus and enhances isoform 2 degradation in the cytoplasm. Isoform 1 interacts with HDAC3 and AKT1; the interactions occur in endothelial cell (EC) under disturbed flow. Isoform 1 interacts with the oncoprotein FOS. Isoform 2 interacts with ATF6; the interaction occurs in a ER stress-dependent manner and is required for DNA binding to the unfolded protein response element (UPRE). Isoform 2 interacts with PIK3R1; the interaction is direct and induces translocation of XBP1 isoform 2 into the nucleus and the unfolded protein response (UPR) XBP1-dependent target genes activation in a ER stress- and/or insulin-dependent but PI3K-independent manner. Post-translationally, acetylated by EP300; acetylation positively regulates the transcriptional activity of XBP1 isoform 2. Isoform 2 is deacetylated by SIRT1; deacetylation negatively regulates the transcriptional activity of XBP1 isoform 2. In terms of processing, ubiquitinated, leading to proteasome-mediated degradation in response to ER stress. X-box-binding protein 1, cytoplasmic form and luminal form are produced by intramembrane proteolytic cleavage of ER membrane-anchored isoform 1 triggered by HM13/SPP in a DERL1-RNF139-dependent and VCP/p97-independent manner. X-box-binding protein 1, luminal form is ubiquitinated leading to proteasomal degradation. Expressed in plasma cells in rheumatoid synovium. Over-expressed in primary breast cancer and metastatic breast cancer cells. Isoform 1 and isoform 2 are expressed at higher level in proliferating as compared to confluent quiescent endothelial cells.

The protein localises to the endoplasmic reticulum. It is found in the nucleus. The protein resides in the cytoplasm. Its subcellular location is the endoplasmic reticulum membrane. It localises to the membrane. Its function is as follows. Functions as a transcription factor during endoplasmic reticulum (ER) stress by regulating the unfolded protein response (UPR). Required for cardiac myogenesis and hepatogenesis during embryonic development, and the development of secretory tissues such as exocrine pancreas and salivary gland. Involved in terminal differentiation of B lymphocytes to plasma cells and production of immunoglobulins. Modulates the cellular response to ER stress in a PIK3R-dependent manner. Binds to the cis-acting X box present in the promoter regions of major histocompatibility complex class II genes. Involved in VEGF-induced endothelial cell (EC) proliferation and retinal blood vessel formation during embryonic development but also for angiogenesis in adult tissues under ischemic conditions. Also functions as a major regulator of the UPR in obesity-induced insulin resistance and type 2 diabetes for the management of obesity and diabetes prevention. Plays a role in the unconventional cytoplasmic splicing processing of its own mRNA triggered by the endoplasmic reticulum (ER) transmembrane endoribonuclease ERN1: upon ER stress, the emerging XBP1 polypeptide chain, as part of a mRNA-ribosome-nascent chain (R-RNC) complex, cotranslationally recruits its own unprocessed mRNA through transient docking to the ER membrane and translational pausing, therefore facilitating efficient IRE1-mediated XBP1 mRNA isoform 2 production. In endothelial cells (EC), associated with KDR, promotes IRE1-mediated XBP1 mRNA isoform 2 productions in a vascular endothelial growth factor (VEGF)-dependent manner, leading to EC proliferation and angiogenesis. Functions as a negative feed-back regulator of the potent transcription factor XBP1 isoform 2 protein levels through proteasome-mediated degradation, thus preventing the constitutive activation of the ER stress response signaling pathway. Inhibits the transactivation activity of XBP1 isoform 2 in myeloma cells. Acts as a weak transcriptional factor. Together with HDAC3, contributes to the activation of NFE2L2-mediated HMOX1 transcription factor gene expression in a PI(3)K/mTORC2/Akt-dependent signaling pathway leading to EC survival under disturbed flow/oxidative stress. Binds to the ER stress response element (ERSE) upon ER stress. Binds to the consensus 5'-GATGACGTG[TG]N(3)[AT]T-3' sequence related to cAMP responsive element (CRE)-like sequences. Binds the Tax-responsive element (TRE) present in the long terminal repeat (LTR) of T-cell leukemia virus type 1 (HTLV-I) and to the TPA response elements (TRE). Associates preferentially to the HDAC3 gene promoter region in a static flow-dependent manner. Binds to the CDH5/VE-cadherin gene promoter region. In terms of biological role, functions as a stress-inducible potent transcriptional activator during endoplasmic reticulum (ER) stress by inducing unfolded protein response (UPR) target genes via binding to the UPR element (UPRE). Up-regulates target genes encoding ER chaperones and ER-associated degradation (ERAD) components to enhance the capacity of productive folding and degradation mechanism, respectively, in order to maintain the homeostasis of the ER under ER stress. Plays a role in the production of immunoglobulins and interleukin-6 in the presence of stimuli required for plasma cell differentiation. Induces phospholipid biosynthesis and ER expansion. Contributes to the VEGF-induced endothelial cell (EC) growth and proliferation in a Akt/GSK-dependent and/or -independent signaling pathway, respectively, leading to beta-catenin nuclear translocation and E2F2 gene expression. Promotes umbilical vein EC apoptosis and atherosclerotisis development in a caspase-dependent signaling pathway, and contributes to VEGF-induced EC proliferation and angiogenesis in adult tissues under ischemic conditions. Involved in the regulation of endostatin-induced autophagy in EC through BECN1 transcriptional activation. Plays a role as an oncogene by promoting tumor progression: stimulates zinc finger protein SNAI1 transcription to induce epithelial-to-mesenchymal (EMT) transition, cell migration and invasion of breast cancer cells. Involved in adipocyte differentiation by regulating lipogenic gene expression during lactation. Plays a role in the survival of both dopaminergic neurons of the substantia nigra pars compacta (SNpc), by maintaining protein homeostasis and of myeloma cells. Increases insulin sensitivity in the liver as a response to a high carbohydrate diet, resulting in improved glucose tolerance. Also improves glucose homeostasis in an ER stress- and/or insulin-independent manner through both binding and proteasome-induced degradation of the transcription factor FOXO1, hence resulting in suppression of gluconeogenic genes expression and in a reduction of blood glucose levels. Controls the induction of de novo fatty acid synthesis in hepatocytes by regulating the expression of a subset of lipogenic genes in an ER stress- and UPR-independent manner. Associates preferentially to the HDAC3 gene promoter region in a disturbed flow-dependent manner. Binds to the BECN1 gene promoter region. Binds to the CDH5/VE-cadherin gene promoter region. Binds to the ER stress response element (ERSE) upon ER stress. Binds to the 5'-CCACG-3' motif in the PPARG promoter. The chain is X-box-binding protein 1 from Homo sapiens (Human).